The following is a 239-amino-acid chain: mRNA turnover protein 4 homolog (239 aa).

A disordered region spans residues 215–239 (FQQMGDDLPESASESTEESDSEDDD). Phosphoserine is present on residues serine 225, serine 229, and serine 233. Residues 229–239 (STEESDSEDDD) show a composition bias toward acidic residues.

The protein belongs to the universal ribosomal protein uL10 family. As to quaternary structure, associates with the pre-60S ribosomal particle. Interacts with MINAS-60 (product of an alternative open reading frame of RBM10).

The protein resides in the nucleus. It localises to the nucleolus. Its subcellular location is the cytoplasm. Component of the ribosome assembly machinery. Nuclear paralog of the ribosomal protein P0, it binds pre-60S subunits at an early stage of assembly in the nucleolus, and is replaced by P0 in cytoplasmic pre-60S subunits and mature 80S ribosomes. The chain is mRNA turnover protein 4 homolog (MRTO4) from Homo sapiens (Human).